A 177-amino-acid chain; its full sequence is Large ribosomal subunit protein uL6 (177 aa).

It belongs to the universal ribosomal protein uL6 family. In terms of assembly, part of the 50S ribosomal subunit.

In terms of biological role, this protein binds to the 23S rRNA, and is important in its secondary structure. It is located near the subunit interface in the base of the L7/L12 stalk, and near the tRNA binding site of the peptidyltransferase center. This is Large ribosomal subunit protein uL6 from Methylorubrum populi (strain ATCC BAA-705 / NCIMB 13946 / BJ001) (Methylobacterium populi).